Here is a 192-residue protein sequence, read N- to C-terminus: Der GTPase-activating protein YihI (192 aa).

Residues 1 to 12 (MSAKQPNRKPAG) show a composition bias toward basic residues. Disordered regions lie at residues 1-87 (MSAK…IKEK) and 145-192 (DTDD…PKKK). The span at 13–26 (KRKESDASAQEGRE) shows a compositional bias: basic and acidic residues. A compositionally biased stretch (basic residues) spans 27-36 (RKRAAKRKGL). Residues 145–172 (DTDDDEDEADFDEADFDEPGQPASEEEL) are compositionally biased toward acidic residues. Basic and acidic residues predominate over residues 183-192 (PEPKPEPKKK).

The protein belongs to the YihI family. In terms of assembly, interacts with Der.

Its function is as follows. A GTPase-activating protein (GAP) that modifies Der/EngA GTPase function. May play a role in ribosome biogenesis. This Aeromonas hydrophila subsp. hydrophila (strain ATCC 7966 / DSM 30187 / BCRC 13018 / CCUG 14551 / JCM 1027 / KCTC 2358 / NCIMB 9240 / NCTC 8049) protein is Der GTPase-activating protein YihI.